We begin with the raw amino-acid sequence, 238 residues long: RxLR effector protein PITG_14788 (238 aa).

The N-terminal stretch at 1-23 is a signal peptide; the sequence is MKSLHAVNLVLLLLLACFAPAPA. A RxLR-dEER motif is present at residues 47–65; it reads RLLRAHSSGKEEQKEEEER.

The protein belongs to the RxLR effector family.

It localises to the secreted. The protein localises to the host cytoplasm. The protein resides in the host cytoskeleton. Its subcellular location is the host nucleus. It is found in the host nucleolus. Its function is as follows. Effector that enhances P.infestans colonization of Nicotiana benthamiana leaves. The polypeptide is RxLR effector protein PITG_14788 (Phytophthora infestans (strain T30-4) (Potato late blight agent)).